A 217-amino-acid polypeptide reads, in one-letter code: 3,4-dihydroxy-2-butanone 4-phosphate synthase (217 aa).

Residues 37 to 38 (RE), Asp42, 150 to 154 (RRGHT), and Glu174 contribute to the D-ribulose 5-phosphate site. Glu38 is a Mg(2+) binding site. His153 provides a ligand contact to Mg(2+).

The protein belongs to the DHBP synthase family. In terms of assembly, homodimer. Requires Mg(2+) as cofactor. Mn(2+) is required as a cofactor.

The catalysed reaction is D-ribulose 5-phosphate = (2S)-2-hydroxy-3-oxobutyl phosphate + formate + H(+). It participates in cofactor biosynthesis; riboflavin biosynthesis; 2-hydroxy-3-oxobutyl phosphate from D-ribulose 5-phosphate: step 1/1. Its function is as follows. Catalyzes the conversion of D-ribulose 5-phosphate to formate and 3,4-dihydroxy-2-butanone 4-phosphate. In Shewanella sp. (strain W3-18-1), this protein is 3,4-dihydroxy-2-butanone 4-phosphate synthase.